A 139-amino-acid polypeptide reads, in one-letter code: Plastocyanin (139 aa).

Positions 1–34 (MKLIAASLRRLSLAVLTVLLVVSSFAVFTPSAAA) are cleaved as a signal peptide. The Plastocyanin-like domain maps to 35–135 (ETYTVKLGSD…HRGAGMVGKI (101 aa)). Residues His-73, Cys-123, His-126, and Met-131 each contribute to the Cu cation site.

The protein belongs to the plastocyanin family. Cu(2+) is required as a cofactor.

The protein resides in the cellular thylakoid membrane. Participates in electron transfer between P700 and the cytochrome b6-f complex in photosystem I. In Trichormus variabilis (strain ATCC 29413 / PCC 7937) (Anabaena variabilis), this protein is Plastocyanin (petE).